The primary structure comprises 943 residues: MRKLVILIILSIVCSLFIGSIESVDTSKFKTCKDSHFCKRNRVSHEVGVMNEMKSKQNFNIVEGSIKLVKQENTIYFDLQEQNQKSNLLTMKLEIYEGGIVRMRAQEKEPLLNKQRYQVQDVLLDTIKTVPIQWKQEPSKQSNTFSFKHGEKECCYVLVQLVPFKLDVYIMNELAITTNSDNLFHFEPISDKPQPLPPKEKKSEEENKEANQEEDNNNNNNDNNEEQQVSTEGYWEERFGSHQDSKPNGPMSIGMDFTFVGSSHVYGIPEHTTRLSLKSTTGNGINEQPYRLYNLDVFEYEIDKTMALYGHVPLMISHDTKKTVGVFWLNAAETFVDIEDVTTPVSPSKKTHWISESGIIDVFYLTGPTPSTIFKQYAYLTGTTALPQMFSLGYHQCKWNYKSEDDVKQVDNGFDENHIPYDVIWLDIEHTDGKRYFTWDNNNFPTPADMQNIIGAKHRKMVTIVDPHIKRDNNYYVHSEATSKGYYIKNKDGNDYDGWCWPGSSSYLDFTNPEIRKWWATQFGYDKYKGSTPNLYIWNDMNEPSVFNGPEVSMHKDAKHHGGFEHRDVHNLYGYYYHMASADGLVQRNADQNDRPFVLSRAFYAGSQRIGAIWTGDNSAQWSHLEISNPMLLSMNLAGITFSGADVGGFFGNPDAELLTRWYQAGAFQPFFRGHAHLDSRRREPWLFNEPYTTIIREAIVKRYSYLPLWYTTFYQNTLNGAPVMRPLWVQYPKEANLFDVDDHYLIGDSLLVKPVTQQSCKTMKVLLPGQSVNEIWYDVDTEKPINAGVIEIDTPLEKIPVYQRGGSIISKKERVRRSTYQMRDDPYTIRIALDSSKSAQGQLYIDDEHSFDYKKGKFLYRQFTFKDNVLSFSDASNKSSTSYKPNVTIEKIVILGVQKPHSITCNITGKEKLSFEYDSTLSKLTIRKPDLLVDTDFIIKLN.

An N-terminal signal peptide occupies residues 1-23 (MRKLVILIILSIVCSLFIGSIES). The segment at 186–231 (FEPISDKPQPLPPKEKKSEEENKEANQEEDNNNNNNDNNEEQQVST) is disordered. Positions 198-211 (PKEKKSEEENKEAN) are enriched in basic and acidic residues. Asp540 serves as the catalytic Nucleophile. Glu543 is an active-site residue. Asp617 (proton donor) is an active-site residue. Residues Asn878, Asn887, and Asn907 are each glycosylated (N-linked (GlcNAc...) asparagine).

It belongs to the glycosyl hydrolase 31 family.

The protein localises to the endoplasmic reticulum. The protein resides in the golgi apparatus. It carries out the reaction N(4)-(alpha-D-Glc-(1-&gt;3)-alpha-D-Man-(1-&gt;2)-alpha-D-Man-(1-&gt;2)-alpha-D-Man-(1-&gt;3)-[alpha-D-Man-(1-&gt;2)-alpha-D-Man-(1-&gt;3)-[alpha-D-Man-(1-&gt;2)-alpha-D-Man-(1-&gt;6)]-alpha-D-Man-(1-&gt;6)]-beta-D-Man-(1-&gt;4)-beta-D-GlcNAc-(1-&gt;4)-beta-D-GlcNAc)-L-asparaginyl-[protein] + H2O = N(4)-(alpha-D-Man-(1-&gt;2)-alpha-D-Man-(1-&gt;2)-alpha-D-Man-(1-&gt;3)-[alpha-D-Man-(1-&gt;2)-alpha-D-Man-(1-&gt;3)-[alpha-D-Man-(1-&gt;2)-alpha-D-Man-(1-&gt;6)]-alpha-D-Man-(1-&gt;6)]-beta-D-Man-(1-&gt;4)-beta-D-GlcNAc-(1-&gt;4)-beta-D-GlcNAc)-L-asparaginyl-[protein] (N-glucan mannose isomer 9A1,2,3B1,2,3) + beta-D-glucose. The catalysed reaction is N(4)-(alpha-D-Glc-(1-&gt;3)-alpha-D-Glc-(1-&gt;3)-alpha-D-Man-(1-&gt;2)-alpha-D-Man-(1-&gt;2)-alpha-D-Man-(1-&gt;3)-[alpha-D-Man-(1-&gt;2)-alpha-D-Man-(1-&gt;3)-[alpha-D-Man-(1-&gt;2)-alpha-D-Man-(1-&gt;6)]-alpha-D-Man-(1-&gt;6)]-beta-D-Man-(1-&gt;4)-beta-D-GlcNAc-(1-&gt;4)-beta-D-GlcNAc)-L-asparaginyl-[protein] + H2O = N(4)-(alpha-D-Glc-(1-&gt;3)-alpha-D-Man-(1-&gt;2)-alpha-D-Man-(1-&gt;2)-alpha-D-Man-(1-&gt;3)-[alpha-D-Man-(1-&gt;2)-alpha-D-Man-(1-&gt;3)-[alpha-D-Man-(1-&gt;2)-alpha-D-Man-(1-&gt;6)]-alpha-D-Man-(1-&gt;6)]-beta-D-Man-(1-&gt;4)-beta-D-GlcNAc-(1-&gt;4)-beta-D-GlcNAc)-L-asparaginyl-[protein] + beta-D-glucose. Its pathway is glycan metabolism; N-glycan metabolism. Cleaves sequentially the 2 innermost alpha-1,3-linked glucose residues from N-linked oligosaccharides on newly synthesized glycoproteins. The sequence is that of Neutral alpha-glucosidase AB (modA) from Dictyostelium discoideum (Social amoeba).